A 798-amino-acid chain; its full sequence is Glycogen phosphorylase (798 aa).

Residue Lys646 is modified to N6-(pyridoxal phosphate)lysine.

This sequence belongs to the glycogen phosphorylase family. The cofactor is pyridoxal 5'-phosphate.

It carries out the reaction [(1-&gt;4)-alpha-D-glucosyl](n) + phosphate = [(1-&gt;4)-alpha-D-glucosyl](n-1) + alpha-D-glucose 1-phosphate. In terms of biological role, phosphorylase is an important allosteric enzyme in carbohydrate metabolism. Enzymes from different sources differ in their regulatory mechanisms and in their natural substrates. However, all known phosphorylases share catalytic and structural properties. The chain is Glycogen phosphorylase (glgP) from Bacillus subtilis (strain 168).